The sequence spans 81 residues: Photosystem I iron-sulfur center (81 aa).

2 4Fe-4S ferredoxin-type domains span residues 2–31 (SHSVKIYDTCIGCTQCVRACPTDVLEMIPW) and 39–68 (IASAPRTEDCVGCKRCESACPTDFLSVRVY). Cysteine 11, cysteine 14, cysteine 17, cysteine 21, cysteine 48, cysteine 51, cysteine 54, and cysteine 58 together coordinate [4Fe-4S] cluster.

As to quaternary structure, the eukaryotic PSI reaction center is composed of at least 11 subunits. The cofactor is [4Fe-4S] cluster.

It localises to the plastid. Its subcellular location is the chloroplast thylakoid membrane. The enzyme catalyses reduced [plastocyanin] + hnu + oxidized [2Fe-2S]-[ferredoxin] = oxidized [plastocyanin] + reduced [2Fe-2S]-[ferredoxin]. In terms of biological role, apoprotein for the two 4Fe-4S centers FA and FB of photosystem I (PSI); essential for photochemical activity. FB is the terminal electron acceptor of PSI, donating electrons to ferredoxin. The C-terminus interacts with PsaA/B/D and helps assemble the protein into the PSI complex. Required for binding of PsaD and PsaE to PSI. PSI is a plastocyanin-ferredoxin oxidoreductase, converting photonic excitation into a charge separation, which transfers an electron from the donor P700 chlorophyll pair to the spectroscopically characterized acceptors A0, A1, FX, FA and FB in turn. This chain is Photosystem I iron-sulfur center, found in Phaseolus vulgaris (Kidney bean).